Consider the following 429-residue polypeptide: Histidine--tRNA ligase (429 aa).

The protein belongs to the class-II aminoacyl-tRNA synthetase family. As to quaternary structure, homodimer.

It is found in the cytoplasm. It catalyses the reaction tRNA(His) + L-histidine + ATP = L-histidyl-tRNA(His) + AMP + diphosphate + H(+). This chain is Histidine--tRNA ligase, found in Stutzerimonas stutzeri (strain A1501) (Pseudomonas stutzeri).